The sequence spans 207 residues: Infectivity protein P11 (207 aa).

The chain crosses the membrane as a helical span at residues 13–28 (WWIVAAIGGLAAFLLL). Positions 64 to 95 (AALQANTQLSAQNAQLQAQMDASRLQLETQLN) form a coiled coil.

The protein localises to the virion membrane. Its function is as follows. Component of the phage ejection machinery. Pilot protein for the formation of the tube that conducts the genome into the target cell. Probably involved in penetration of the bacterial outer membrane and for making the peptidoglycan layer accessible to the viral transglycosylase. Essential for viral infectivity. In Enterobacteria phage PRD1 (Bacteriophage PRD1), this protein is Infectivity protein P11 (XI).